The following is a 291-amino-acid chain: Protease HtpX (291 aa).

The next 2 helical transmembrane spans lie at 4 to 24 and 36 to 56; these read IALF…VLNI and LSGL…ISLM. H143 lines the Zn(2+) pocket. The active site involves E144. H147 is a binding site for Zn(2+). 2 helical membrane-spanning segments follow: residues 151–171 and 199–219; these read GDMI…IFLS and FIVS…LTMW. Position 225 (E225) interacts with Zn(2+).

This sequence belongs to the peptidase M48B family. It depends on Zn(2+) as a cofactor.

It localises to the cell inner membrane. The protein is Protease HtpX of Aliivibrio fischeri (strain MJ11) (Vibrio fischeri).